A 442-amino-acid polypeptide reads, in one-letter code: UDP-N-acetylmuramoylalanine--D-glutamate ligase (442 aa).

An ATP-binding site is contributed by 113 to 119 (GSNGKTT).

This sequence belongs to the MurCDEF family.

It localises to the cytoplasm. It carries out the reaction UDP-N-acetyl-alpha-D-muramoyl-L-alanine + D-glutamate + ATP = UDP-N-acetyl-alpha-D-muramoyl-L-alanyl-D-glutamate + ADP + phosphate + H(+). Its pathway is cell wall biogenesis; peptidoglycan biosynthesis. Its function is as follows. Cell wall formation. Catalyzes the addition of glutamate to the nucleotide precursor UDP-N-acetylmuramoyl-L-alanine (UMA). The sequence is that of UDP-N-acetylmuramoylalanine--D-glutamate ligase from Coxiella burnetii (strain CbuG_Q212) (Coxiella burnetii (strain Q212)).